We begin with the raw amino-acid sequence, 508 residues long: Zinc finger CCCH-type with G patch domain-containing protein (508 aa).

A C3H1-type zinc finger spans residues 154-177 (PCNYYLEGECRFDETRCRYSHGAL). A disordered region spans residues 253-279 (DDELSSDSEETNETDGSDAANESDMDD). The region spanning 309–355 (TRGIGSKLMASMGYIHGTGLGSDGRGIVTPVSAQILPQGRSLDACME) is the G-patch domain. The segment covering 486–495 (QAQESSLSKE) has biased composition (polar residues). Residues 486 to 508 (QAQESSLSKEQQTRKSKNKMFEF) are disordered. Basic residues predominate over residues 499–508 (RKSKNKMFEF).

It is found in the nucleus. Its function is as follows. Transcription repressor. The sequence is that of Zinc finger CCCH-type with G patch domain-containing protein from Drosophila virilis (Fruit fly).